We begin with the raw amino-acid sequence, 638 residues long: Pentatricopeptide repeat-containing protein At3g49730 (638 aa).

PPR repeat units follow at residues S130–L164, E166–P200, D201–K231, N235–P269, D270–P304, N305–A340, D341–P375, S376–P410, D411–P445, G446–S480, Q483–K513, and N520–P554. Positions L604–L638 are disordered.

This sequence belongs to the PPR family. P subfamily.

The sequence is that of Pentatricopeptide repeat-containing protein At3g49730 from Arabidopsis thaliana (Mouse-ear cress).